We begin with the raw amino-acid sequence, 73 residues long: Antitoxin VapB2 (73 aa).

Forms a homodimer, which binds to a toxin homodimer, which then oligomerizes further to a hetero-octamer. When bound to toxin VapC2 the toxin activity is inhibited; 1 antitoxin may suffice to inhibit toxin.

Its function is as follows. Antitoxin component of a type II toxin-antitoxin (TA) system. Upon expression in M.smegmatis neutralizes the effect of cognate toxin VapC2. The C-terminal helix of the antitoxin may obstruct the toxin's RNA-binding groove, blocking access to the active sites. Additionally, the C-terminal arginine of the antitoxin may remove Mg(2+) ions from the toxin active sites. This Mycobacterium tuberculosis (strain ATCC 25618 / H37Rv) protein is Antitoxin VapB2 (vapB2).